The sequence spans 74 residues: MNPGFDAVDQETAAAQAVADAHGVPFLGIRGMSDGPGDPLHLPGFPVQFFVYKQIAANNAARVTEAFLQNWAGV.

A signal peptide spans 1 to 19 (MNPGFDAVDQETAAAQAVA).

This is an uncharacterized protein from Mycobacterium tuberculosis (strain ATCC 25618 / H37Rv).